The sequence spans 267 residues: Coiled-coil domain-containing protein 172 (267 aa).

2 coiled-coil regions span residues 24-97 and 128-191; these read MREV…CEAI and LMKE…EETE.

Belongs to the CCDC172 family. May interact with TEKT2.

Its subcellular location is the cytoplasm. It localises to the cell projection. The protein resides in the cilium. In Mus musculus (Mouse), this protein is Coiled-coil domain-containing protein 172 (Ccdc172).